Consider the following 234-residue polypeptide: Elongation factor Tu (234 aa).

In terms of domain architecture, tr-type G spans 1–125; it reads KNMITGAAQM…EVDAFIPTPE (125 aa). Position 47 to 50 (47 to 50) interacts with GTP; it reads NKQD.

The protein belongs to the TRAFAC class translation factor GTPase superfamily. Classic translation factor GTPase family. EF-Tu/EF-1A subfamily. Monomer.

It localises to the cytoplasm. The enzyme catalyses GTP + H2O = GDP + phosphate + H(+). Functionally, GTP hydrolase that promotes the GTP-dependent binding of aminoacyl-tRNA to the A-site of ribosomes during protein biosynthesis. The protein is Elongation factor Tu (tufA) of Prochlorothrix hollandica.